The primary structure comprises 202 residues: HTH-type transcriptional regulator BetI 1 (202 aa).

Residues 8 to 68 (PIRRRQLIQA…SAMRQILWDL (61 aa)) enclose the HTH tetR-type domain. Residues 31–50 (TIARIAKRAGVSAGIISHYF) constitute a DNA-binding region (H-T-H motif).

The protein operates within amine and polyamine biosynthesis; betaine biosynthesis via choline pathway [regulation]. Functionally, repressor involved in the biosynthesis of the osmoprotectant glycine betaine. It represses transcription of the choline transporter BetT and the genes of BetAB involved in the synthesis of glycine betaine. This is HTH-type transcriptional regulator BetI 1 from Chromohalobacter salexigens (strain ATCC BAA-138 / DSM 3043 / CIP 106854 / NCIMB 13768 / 1H11).